A 661-amino-acid polypeptide reads, in one-letter code: Kyphoscoliosis peptidase (661 aa).

A compositionally biased stretch (polar residues) spans 28 to 41 (GTLSDQQANPSSLL). 2 disordered regions span residues 28–47 (GTLS…GGGF) and 115–136 (QGDK…HAYP). Catalysis depends on residues Cys-225, His-267, and Asp-282.

This sequence belongs to the transglutaminase-like superfamily. Interacts with IGFN1 and FLNC. Highly expressed in skeletal muscle.

The protein resides in the cytoplasm. The protein localises to the cytoskeleton. It is found in the myofibril. Its subcellular location is the sarcomere. It localises to the z line. Functionally, probable cytoskeleton-associated protease required for normal muscle growth. Involved in function, maturation and stabilization of the neuromuscular junction. May act by cleaving muscle-specific proteins such as FLNC. This chain is Kyphoscoliosis peptidase, found in Homo sapiens (Human).